We begin with the raw amino-acid sequence, 212 residues long: MSVGILGTKLGMTQIFDKETGIAIPVTVIHAGPCPITQVKTPATDGYNSIQIGYGEVKEKALNKPKLGHLKKSASTPVRHLKEYRLENAADYQLGDGIKVDLFKPGDLVDVAGKTIGRGFAGYQKRHNFKRGSMTHGSKNHRLPGSTGAGTTPGRVYPGKRMAGRYGGTQVTIRKLTVVQIDTERNLILIKGAVPGKPGNLLSITPAKTVGK.

The tract at residues 130–158 (KRGSMTHGSKNHRLPGSTGAGTTPGRVYP) is disordered.

Belongs to the universal ribosomal protein uL3 family. Part of the 50S ribosomal subunit. Forms a cluster with proteins L14 and L19.

One of the primary rRNA binding proteins, it binds directly near the 3'-end of the 23S rRNA, where it nucleates assembly of the 50S subunit. The chain is Large ribosomal subunit protein uL3 from Gloeothece citriformis (strain PCC 7424) (Cyanothece sp. (strain PCC 7424)).